Reading from the N-terminus, the 357-residue chain is BLOC-1-related complex subunit 6 (357 aa).

The tract at residues 20–196 is disordered; the sequence is HQALVFGGGP…SGAGGGRRAT (177 aa). The span at 90–99 shows a compositional bias: low complexity; sequence GAGSRRGAPG. The segment covering 138–149 has biased composition (acidic residues); sequence EQQEEEDNDEEA. The span at 150–162 shows a compositional bias: low complexity; it reads AAGSRAGRSFSSR. Ser168 is subject to Phosphoserine. Thr196 is subject to Phosphothreonine. Ser199 carries the post-translational modification Phosphoserine. A disordered region spans residues 227-256; sequence LSGAPPPPPSAPARPCPAPAPTPTPAIPPI. Over residues 230–256 the composition is skewed to pro residues; it reads APPPPPSAPARPCPAPAPTPTPAIPPI.

It belongs to the BORCS6 family. Component of the BLOC-one-related complex (BORC) which is composed of BLOC1S1, BLOC1S2, BORCS5, BORCS6, BORCS7, BORCS8, KXD1 and SNAPIN.

Its subcellular location is the lysosome membrane. In terms of biological role, as part of the BORC complex may play a role in lysosomes movement and localization at the cell periphery. Associated with the cytosolic face of lysosomes, the BORC complex may recruit ARL8B and couple lysosomes to microtubule plus-end-directed kinesin motor. This Homo sapiens (Human) protein is BLOC-1-related complex subunit 6.